The primary structure comprises 280 residues: Eukaryotic translation initiation factor 3 subunit F-1 (280 aa).

Positions 8–138 (VRVHPVVLFQ…LRAYVCIQLG (131 aa)) constitute an MPN domain.

Belongs to the eIF-3 subunit F family. As to quaternary structure, component of the eukaryotic translation initiation factor 3 (eIF-3) complex. The eIF-3 complex interacts with pix.

The protein localises to the cytoplasm. Component of the eukaryotic translation initiation factor 3 (eIF-3) complex, which is involved in protein synthesis of a specialized repertoire of mRNAs and, together with other initiation factors, stimulates binding of mRNA and methionyl-tRNAi to the 40S ribosome. The eIF-3 complex specifically targets and initiates translation of a subset of mRNAs involved in cell proliferation. This chain is Eukaryotic translation initiation factor 3 subunit F-1, found in Drosophila virilis (Fruit fly).